The following is a 262-amino-acid chain: tRNA pseudouridine synthase A (262 aa).

Aspartate 51 acts as the Nucleophile in catalysis. Tyrosine 109 contacts substrate.

The protein belongs to the tRNA pseudouridine synthase TruA family. In terms of assembly, homodimer.

It catalyses the reaction uridine(38/39/40) in tRNA = pseudouridine(38/39/40) in tRNA. Its function is as follows. Formation of pseudouridine at positions 38, 39 and 40 in the anticodon stem and loop of transfer RNAs. In Dechloromonas aromatica (strain RCB), this protein is tRNA pseudouridine synthase A.